Here is a 438-residue protein sequence, read N- to C-terminus: Serine hydroxymethyltransferase (438 aa).

(6S)-5,6,7,8-tetrahydrofolate is bound by residues L133 and 137-139; that span reads GHL. K242 carries the post-translational modification N6-(pyridoxal phosphate)lysine.

The protein belongs to the SHMT family. In terms of assembly, homodimer. Pyridoxal 5'-phosphate serves as cofactor.

It localises to the cytoplasm. It carries out the reaction (6R)-5,10-methylene-5,6,7,8-tetrahydrofolate + glycine + H2O = (6S)-5,6,7,8-tetrahydrofolate + L-serine. Its pathway is one-carbon metabolism; tetrahydrofolate interconversion. It participates in amino-acid biosynthesis; glycine biosynthesis; glycine from L-serine: step 1/1. Functionally, catalyzes the reversible interconversion of serine and glycine with tetrahydrofolate (THF) serving as the one-carbon carrier. This reaction serves as the major source of one-carbon groups required for the biosynthesis of purines, thymidylate, methionine, and other important biomolecules. Also exhibits THF-independent aldolase activity toward beta-hydroxyamino acids, producing glycine and aldehydes, via a retro-aldol mechanism. The chain is Serine hydroxymethyltransferase from Brucella canis (strain ATCC 23365 / NCTC 10854 / RM-666).